The following is a 337-amino-acid chain: Ribosomal RNA small subunit methyltransferase C (337 aa).

It belongs to the methyltransferase superfamily. RsmC family. In terms of assembly, monomer.

It localises to the cytoplasm. The catalysed reaction is guanosine(1207) in 16S rRNA + S-adenosyl-L-methionine = N(2)-methylguanosine(1207) in 16S rRNA + S-adenosyl-L-homocysteine + H(+). Functionally, specifically methylates the guanine in position 1207 of 16S rRNA in the 30S particle. This chain is Ribosomal RNA small subunit methyltransferase C, found in Acinetobacter baumannii (strain AB307-0294).